The chain runs to 287 residues: Probable endonuclease 4 (287 aa).

Zn(2+) is bound by residues His-69, His-109, Glu-144, Asp-178, His-181, His-215, Asp-228, His-230, and Glu-260.

It belongs to the AP endonuclease 2 family. The cofactor is Zn(2+).

It carries out the reaction Endonucleolytic cleavage to 5'-phosphooligonucleotide end-products.. Endonuclease IV plays a role in DNA repair. It cleaves phosphodiester bonds at apurinic or apyrimidinic (AP) sites, generating a 3'-hydroxyl group and a 5'-terminal sugar phosphate. This Thermotoga sp. (strain RQ2) protein is Probable endonuclease 4.